Consider the following 946-residue polypeptide: Sorting nexin-14 (946 aa).

The next 2 membrane-spanning stretches (helical) occupy residues 24-44 and 49-69; these read ICRQ…ASLL and IHIL…YCSL. One can recognise a PXA domain in the interval 130 to 304; sequence SSKVDASLSE…LLIIFIDDSP (175 aa). Positions 336 to 468 constitute an RGS domain; sequence ELKQIREQQD…CHSDEYFRQL (133 aa). Phosphoserine is present on Ser548. One can recognise a PX domain in the interval 570–690; it reads PYVDFFEDPS…DFLSPNGGET (121 aa).

The protein belongs to the sorting nexin family. In terms of tissue distribution, widely expressed both in fetal and adult tissues.

The protein localises to the lysosome membrane. It is found in the late endosome membrane. Its subcellular location is the cell projection. The protein resides in the dendrite. Plays a role in maintaining normal neuronal excitability and synaptic transmission. May be involved in several stages of intracellular trafficking. Required for autophagosome clearance, possibly by mediating the fusion of lysosomes with autophagosomes. Binds phosphatidylinositol 3,5-bisphosphate (PtdIns(3,5)P2), a key component of late endosomes/lysosomes. Does not bind phosphatidylinositol 3-phosphate (PtdIns(3P)). The sequence is that of Sorting nexin-14 (SNX14) from Homo sapiens (Human).